We begin with the raw amino-acid sequence, 297 residues long: Protoheme IX farnesyltransferase (297 aa).

A run of 9 helical transmembrane segments spans residues 23 to 43 (VTQLAVFCAVIGMFLAAPGMP), 49 to 69 (VFGTLGIWLLAAAAFAINCLI), 93 to 113 (IQVLSLSGLLGGAGMLVLYHL), 117 to 137 (LTMWLTFATFVGYAIIYTVIL), 144 to 164 (NIVIGGLSGAMPPALGWAAVA), 171 to 191 (AWVLVLIIFIWTPPHFWALAL), 215 to 235 (RLHILLYSFALLATTLLPYAI), 238 to 258 (SGALYLASALALGGMFVWYAW), and 275 to 295 (FSILYLALLFGALLIDHWVGL).

The protein belongs to the UbiA prenyltransferase family. Protoheme IX farnesyltransferase subfamily.

Its subcellular location is the cell inner membrane. The catalysed reaction is heme b + (2E,6E)-farnesyl diphosphate + H2O = Fe(II)-heme o + diphosphate. It participates in porphyrin-containing compound metabolism; heme O biosynthesis; heme O from protoheme: step 1/1. Its function is as follows. Converts heme B (protoheme IX) to heme O by substitution of the vinyl group on carbon 2 of heme B porphyrin ring with a hydroxyethyl farnesyl side group. This is Protoheme IX farnesyltransferase from Bordetella bronchiseptica (strain ATCC BAA-588 / NCTC 13252 / RB50) (Alcaligenes bronchisepticus).